The following is a 556-amino-acid chain: Formate--tetrahydrofolate ligase (556 aa).

65–72 serves as a coordination point for ATP; that stretch reads TPAGEGKT.

The protein belongs to the formate--tetrahydrofolate ligase family.

The enzyme catalyses (6S)-5,6,7,8-tetrahydrofolate + formate + ATP = (6R)-10-formyltetrahydrofolate + ADP + phosphate. The protein operates within one-carbon metabolism; tetrahydrofolate interconversion. The protein is Formate--tetrahydrofolate ligase of Proteus mirabilis (strain HI4320).